Consider the following 266-residue polypeptide: Glutamate racemase (266 aa).

Residues 9 to 10 (DS) and 41 to 42 (YG) each bind substrate. Cys72 functions as the Proton donor/acceptor in the catalytic mechanism. Residue 73–74 (NT) coordinates substrate. Catalysis depends on Cys184, which acts as the Proton donor/acceptor. A substrate-binding site is contributed by 185 to 186 (TH).

The protein belongs to the aspartate/glutamate racemases family.

The catalysed reaction is L-glutamate = D-glutamate. The protein operates within cell wall biogenesis; peptidoglycan biosynthesis. Functionally, provides the (R)-glutamate required for cell wall biosynthesis. The protein is Glutamate racemase of Staphylococcus haemolyticus (strain JCSC1435).